We begin with the raw amino-acid sequence, 125 residues long: Phosphoribosyl-AMP cyclohydrolase (125 aa).

Asp-74 is a Mg(2+) binding site. Zn(2+) is bound at residue Cys-75. Residues Asp-76 and Asp-78 each contribute to the Mg(2+) site. Zn(2+) is bound by residues Cys-92 and Cys-99.

The protein belongs to the PRA-CH family. In terms of assembly, homodimer. Mg(2+) serves as cofactor. The cofactor is Zn(2+).

It localises to the cytoplasm. It catalyses the reaction 1-(5-phospho-beta-D-ribosyl)-5'-AMP + H2O = 1-(5-phospho-beta-D-ribosyl)-5-[(5-phospho-beta-D-ribosylamino)methylideneamino]imidazole-4-carboxamide. Its pathway is amino-acid biosynthesis; L-histidine biosynthesis; L-histidine from 5-phospho-alpha-D-ribose 1-diphosphate: step 3/9. Its function is as follows. Catalyzes the hydrolysis of the adenine ring of phosphoribosyl-AMP. The protein is Phosphoribosyl-AMP cyclohydrolase of Syntrophotalea carbinolica (strain DSM 2380 / NBRC 103641 / GraBd1) (Pelobacter carbinolicus).